A 392-amino-acid chain; its full sequence is ATP phosphoribosyltransferase regulatory subunit (392 aa).

Belongs to the class-II aminoacyl-tRNA synthetase family. HisZ subfamily. As to quaternary structure, heteromultimer composed of HisG and HisZ subunits.

The protein localises to the cytoplasm. The protein operates within amino-acid biosynthesis; L-histidine biosynthesis; L-histidine from 5-phospho-alpha-D-ribose 1-diphosphate: step 1/9. In terms of biological role, required for the first step of histidine biosynthesis. May allow the feedback regulation of ATP phosphoribosyltransferase activity by histidine. The chain is ATP phosphoribosyltransferase regulatory subunit from Gloeobacter violaceus (strain ATCC 29082 / PCC 7421).